Here is a 354-residue protein sequence, read N- to C-terminus: Serum paraoxonase/lactonase 3 (354 aa).

Cys42 and Cys352 are disulfide-bonded. N-linked (GlcNAc...) asparagine glycosylation occurs at Asn50. Ca(2+) contacts are provided by Glu53 and Asp54. The active-site Proton acceptor is the His114. Ca(2+) is bound at residue Ile116. Position 165 is a phosphoserine (Ser165). The Ca(2+) site is built by Asn167, Asn168, Asn223, Asp268, and Asn269. Asn269 carries an N-linked (GlcNAc...) asparagine glycan.

It belongs to the paraoxonase family. In terms of assembly, homodimer. Ca(2+) serves as cofactor. In terms of processing, glycosylated. The signal sequence is not cleaved.

Its subcellular location is the secreted. It localises to the extracellular space. It carries out the reaction a phenyl acetate + H2O = a phenol + acetate + H(+). It catalyses the reaction An aryl dialkyl phosphate + H2O = dialkyl phosphate + an aryl alcohol.. The catalysed reaction is an N-acyl-L-homoserine lactone + H2O = an N-acyl-L-homoserine + H(+). In terms of biological role, has low activity towards the organophosphate paraxon and aromatic carboxylic acid esters. Rapidly hydrolyzes lactones such as statin prodrugs (e.g. lovastatin). Hydrolyzes aromatic lactones and 5- or 6-member ring lactones with aliphatic substituents but not simple lactones or those with polar substituents. This is Serum paraoxonase/lactonase 3 (PON3) from Oryctolagus cuniculus (Rabbit).